The primary structure comprises 170 residues: N-alpha-acetyltransferase 50 (170 aa).

Residues 6–155 (IELGDVTPHN…DAHVLQKNLK (150 aa)) form the N-acetyltransferase domain. Tyrosine 31 serves as a coordination point for substrate. Tyrosine 73 is an active-site residue. Methionine 75 is a substrate binding site. Position 77 to 90 (77 to 90 (LGCLAPYRRLGIGT)) interacts with acetyl-CoA. 79-90 (CLAPYRRLGIGT) serves as a coordination point for CoA. Histidine 112 is an active-site residue. 117-126 (NESAIDFYRK) is a binding site for CoA. Residues 138–141 (YYKR) form a substrate region.

It belongs to the acetyltransferase family. GNAT subfamily.

The protein localises to the cytoplasm. It is found in the nucleus. It catalyses the reaction N-terminal L-methionyl-L-alanyl-[protein] + acetyl-CoA = N-terminal N(alpha)-acetyl-L-methionyl-L-alanyl-[protein] + CoA + H(+). The enzyme catalyses N-terminal L-methionyl-L-seryl-[protein] + acetyl-CoA = N-terminal N(alpha)-acetyl-L-methionyl-L-seryl-[protein] + CoA + H(+). It carries out the reaction N-terminal L-methionyl-L-valyl-[protein] + acetyl-CoA = N-terminal N(alpha)-acetyl-L-methionyl-L-valyl-[protein] + CoA + H(+). The catalysed reaction is N-terminal L-methionyl-L-threonyl-[protein] + acetyl-CoA = N-terminal N(alpha)-acetyl-L-methionyl-L-threonyl-[protein] + CoA + H(+). It catalyses the reaction N-terminal L-methionyl-L-lysyl-[protein] + acetyl-CoA = N-terminal N(alpha)-acetyl-L-methionyl-L-lysyl-[protein] + CoA + H(+). The enzyme catalyses N-terminal L-methionyl-L-leucyl-[protein] + acetyl-CoA = N-terminal N(alpha)-acetyl-L-methionyl-L-leucyl-[protein] + CoA + H(+). It carries out the reaction N-terminal L-methionyl-L-phenylalanyl-[protein] + acetyl-CoA = N-terminal N(alpha)-acetyl-L-methionyl-L-phenylalanyl-[protein] + CoA + H(+). The catalysed reaction is N-terminal L-methionyl-L-tyrosyl-[protein] + acetyl-CoA = N-terminal N(alpha)-acetyl-L-methionyl-L-tyrosyl-[protein] + CoA + H(+). Its function is as follows. N-alpha-acetyltransferase that acetylates the N-terminus of proteins that retain their initiating methionine. Has a broad substrate specificity: able to acetylate the initiator methionine of most peptides, except for those with a proline in second position. Also displays N-epsilon-acetyltransferase activity by mediating acetylation of the side chain of specific lysines on proteins. The relevance of N-epsilon-acetyltransferase activity is however unclear. Required for sister chromatid cohesion during mitosis by promoting binding of CDCA5/sororin to cohesin. The polypeptide is N-alpha-acetyltransferase 50 (naa50) (Xenopus laevis (African clawed frog)).